The following is a 351-amino-acid chain: Soluble interferon alpha/beta receptor OPG204 (351 aa).

The N-terminal stretch at 1-23 (MKMKMMVRIYFVSLSLLLFHSYA) is a signal peptide. Ig-like C2-type domains follow at residues 65–137 (LGEP…KNGD) and 155–237 (PKTY…IVVS). Cystine bridges form between C73–C129 and C172–C221. N-linked (GlcNAc...) asparagine; by host glycosylation is found at N117, N182, N261, N269, and N321. The region spanning 246–345 (PSQDHRFKLI…HNYYFDKTLT (100 aa)) is the Ig-like V-type domain. A disulfide bridge connects residues C272 and C333.

It belongs to the interleukin-1 receptor family. In terms of assembly, interacts with host IFNA1.

The protein localises to the secreted. Functionally, counteracts the antiviral effects of host IFN-alpha/beta and key IFN-inducible proteins involved in viral RNA degradation suxh as host OAS1. Acts as a soluble IFN-alpha receptor and thus inhibits the interaction between host IFN-alpha and its receptor. This chain is Soluble interferon alpha/beta receptor OPG204 (OPG204), found in Cynomys gunnisoni (Gunnison's prairie dog).